The primary structure comprises 1235 residues: Receptor-type adenylate cyclase ESAG 4 (1235 aa).

Positions 1 to 20 are disordered; that stretch reads MNMLHLSDRNASLAPSGGEH. The Cytoplasmic portion of the chain corresponds to 1–32; the sequence is MNMLHLSDRNASLAPSGGEHSLPTGGAVCRDA. A helical transmembrane segment spans residues 33-53; it reads MDILPVILRAPVALLLLLVVL. Over 54 to 858 the chain is Extracellular; sequence PQLSVGAEAN…SNAGRISGAS (805 aa). Residues Asn63, Asn90, Asn97, Asn362, Asn531, Asn566, Asn705, and Asn830 are each glycosylated (N-linked (GlcNAc...) asparagine). A helical transmembrane segment spans residues 859–879; sequence LVGIIIGGALALFLVVALGVV. Residues 880 to 1235 are Cytoplasmic-facing; the sequence is PYFFLRNTVI…VSSQVEERLL (356 aa). The region spanning 900-1054 is the Guanylate cyclase domain; that stretch reads TLIFTDIESS…RTSNMAARTE (155 aa). Mg(2+) is bound by residues Asp905 and Asp948.

It belongs to the adenylyl cyclase class-3 family. Mg(2+) serves as cofactor.

The protein resides in the membrane. The catalysed reaction is ATP = 3',5'-cyclic AMP + diphosphate. Functionally, could act as a receptor for an unknown ligand. The polypeptide is Receptor-type adenylate cyclase ESAG 4 (ESAG4) (Trypanosoma brucei brucei).